The sequence spans 363 residues: Ferrochelatase (363 aa).

Positions 209 and 290 each coordinate Fe cation.

Belongs to the ferrochelatase family.

It localises to the cytoplasm. The catalysed reaction is heme b + 2 H(+) = protoporphyrin IX + Fe(2+). It functions in the pathway porphyrin-containing compound metabolism; protoheme biosynthesis; protoheme from protoporphyrin-IX: step 1/1. Catalyzes the ferrous insertion into protoporphyrin IX. In Methylibium petroleiphilum (strain ATCC BAA-1232 / LMG 22953 / PM1), this protein is Ferrochelatase.